Reading from the N-terminus, the 442-residue chain is MFNNDPLQKYDKELFDLLEKEKNRQIETINLIASENLTNTAVRECLGDRISNKYSEGYPHKRYYGGNDYVDKIEELCYKRALEAFNVSEEEWGVNVQPLSGSAANVQALYALVGVKGKIMGMHLCSGGHLTHGFFDEKKKVSITSDLFESKLYKCNSEGYVDMESVRNLALSFQPKVIICGYTSYPRDIDYKGFREICDEVNAYLFADISHISSFVACNLLNNPFTYADVVTTTTHKILRGPRSALIFFNKKRNPGIDQKINSSVFPSFQGGPHNNKIAAVACQLKEVNTPFFKEYTKQVLLNSKALAECLLKRNLDLVTNGTDNHLIVVDLRKYNITGSKLQETCNAINIALNKNTIPSDVDCVSPSGIRIGTPALTTRGCKEKDMEFIADMLLKAILLTDELQQKYGKKLVDFKKGLVNNPKIDELKKEVVQWAKNLPFA.

Pyridoxal 5'-phosphate is bound by residues tyrosine 54, 100–102, and histidine 236; that span reads SGS. A disulfide bridge links cysteine 125 with cysteine 364. Lysine 237 carries the N6-(pyridoxal phosphate)lysine modification. Residue glycine 272 participates in pyridoxal 5'-phosphate binding.

This sequence belongs to the SHMT family. Homodimer. Pyridoxal 5'-phosphate is required as a cofactor.

The protein resides in the cytoplasm. It localises to the mitochondrion matrix. The protein localises to the plastid. Its subcellular location is the apicoplast. It is found in the nucleus. It carries out the reaction (6R)-5,10-methylene-5,6,7,8-tetrahydrofolate + glycine + H2O = (6S)-5,6,7,8-tetrahydrofolate + L-serine. It functions in the pathway one-carbon metabolism; tetrahydrofolate interconversion. Its activity is regulated as follows. Redox regulation; active in reducing conditions, inactive in oxidizing conditions. The reduction of the cysteine pairs allows the access binding of the tetrahydrofolate substrate to its binding site. This mechanism appears to be unique to Plasmodium species. In terms of biological role, catalyzes the interconversion of serine to glycine accompanied with the production of 5,10-methylenetetrahydrofolate, a source of one-carbon units used by thymidylate synthase to convert dUMP to dTMP for DNA synthesis. Binds to its own mRNA and to the mRNA of bifunctional dihydrofolate reductase-thymidylate synthase (DHFR-TS) in vitro; the physiological relevance of this interaction is not clear. This chain is Serine hydroxymethyltransferase, found in Plasmodium falciparum (isolate 3D7).